The sequence spans 215 residues: Redox-sensing transcriptional repressor Rex 2 (215 aa).

The H-T-H motif DNA-binding region spans 15–54; sequence VYLRYLKMLGDSGVKRIKSREFSEMIQIPSATIRRDFSHV. 89-94 is an NAD(+) binding site; it reads GCGNLG.

Belongs to the transcriptional regulatory Rex family. In terms of assembly, homodimer.

The protein resides in the cytoplasm. Its function is as follows. Modulates transcription in response to changes in cellular NADH/NAD(+) redox state. The protein is Redox-sensing transcriptional repressor Rex 2 of Enterococcus faecalis (strain ATCC 700802 / V583).